Reading from the N-terminus, the 76-residue chain is uncharacterized protein (76 aa).

This sequence to L.innocua lin1255, lin1742 and lin2600.

This is an uncharacterized protein from Listeria innocua serovar 6a (strain ATCC BAA-680 / CLIP 11262).